The primary structure comprises 2287 residues: Serine/threonine-protein kinase MEC1 (2287 aa).

The region spanning 1310-1864 (TLAKKSLETD…LWYISILLNS (555 aa)) is the FAT domain. Positions 1968–2271 (FSSQYMVFNS…QVEALTQESC (304 aa)) constitute a PI3K/PI4K catalytic domain. Positions 1974–1980 (VFNSLKK) are G-loop. A catalytic loop region spans residues 2140–2148 (GLGDRHCEN). The tract at residues 2160 to 2184 (HVDFDCLFEKGKKLPVPEIVPFRLT) is activation loop. An FATC domain is found at 2255–2287 (LALSVSGQVEALTQESCSVENLSKMYIGWLPFW).

The protein belongs to the PI3/PI4-kinase family. ATM subfamily.

The protein resides in the nucleus. It carries out the reaction L-seryl-[protein] + ATP = O-phospho-L-seryl-[protein] + ADP + H(+). It catalyses the reaction L-threonyl-[protein] + ATP = O-phospho-L-threonyl-[protein] + ADP + H(+). In terms of biological role, serine/threonine protein kinase which activates checkpoint signaling upon genotoxic stresses such as ionizing radiation (IR), ultraviolet light (UV), or DNA replication stalling, thereby acting as a DNA damage sensor. Recognizes the substrate consensus sequence [ST]-Q. Recruited to DNA lesions in order to initiate the DNA repair by homologous recombination. Phosphorylates histone H2A to form H2AS128ph (gamma-H2A) at sites of DNA damage, also involved in the regulation of DNA damage response mechanism. Required for cell growth and meiotic recombination. In Kluyveromyces lactis (strain ATCC 8585 / CBS 2359 / DSM 70799 / NBRC 1267 / NRRL Y-1140 / WM37) (Yeast), this protein is Serine/threonine-protein kinase MEC1 (MEC1).